The sequence spans 374 residues: Trichodiene synthase (374 aa).

7 residues coordinate Mg(2+): D100, E164, N225, S229, E233, D239, and I241. An aspartate-rich domain region spans residues 100–104; sequence DDSKD.

Belongs to the trichodiene synthase family. The cofactor is Mg(2+). Requires Mn(2+) as cofactor.

It carries out the reaction (2E,6E)-farnesyl diphosphate = trichodiene + diphosphate. It participates in sesquiterpene biosynthesis; trichothecene biosynthesis. With respect to regulation, benzyl triethylammonium cation (BTAC) acts as a competitive inhibitor of trichodiene synthase reaction in the presence of pyrophosphate (PPi). Functionally, trichodiene synthase; part of the core gene cluster that mediates the biosynthesis of trichothecenes, a very large family of chemically related bicyclic sesquiterpene compounds acting as mycotoxins, including T2-toxin. The biosynthesis of trichothecenes begins with the cyclization of farnesyl diphosphate to trichodiene and is catalyzed by the trichodiene synthase TRI5. Trichodiene undergoes a series of oxygenations catalyzed by the cytochrome P450 monooxygenase TRI4. TRI4 controls the addition of four oxygens at C-2, C-3, C-11, and the C-12, C-13-epoxide to form the intermediate isotrichotriol. Isotrichotriol then undergoes a non-enzymatic isomerization and cyclization to form isotrichodermol. During this process, the oxygen at the C-2 position becomes the pyran ring oxygen and the hydroxyl group at C-11 is lost. More complex type A trichothecenes are built by modifying isotrichodermol through a series of paired hydroxylation and acetylation or acylation steps. Isotrichodermol is converted to isotrichodermin by the acetyltransferase TRI101. TRI101 encodes a C-3 transacetylase that acts as a self-protection or resistance factor during biosynthesis and that the presence of a free C-3 hydroxyl group is a key component of Fusarium trichothecene phytotoxicity. A second hydroxyl group is added to C-15 by the trichothecene C-15 hydroxylase TRI11, producing 15-decalonectrin, which is then acetylated by TRI3, producing calonectrin. A third hydroxyl group is added at C-4 by the cytochrome P450 monooxygenase TRI13, converting calonectrin to 3,15-diacetoxyspirpenol, which is subsequently acetylated by the acetyltransferase TRI7. A fourth hydroxyl group is added to C-8 by the cytochrome P450 monooxygenase TRI1, followed by the addition of an isovaleryl moiety by TRI16. Finally, the acetyl group is removed from the C-3 position by the trichothecene C-3 esterase TRI8 to produce T-2 toxin. This chain is Trichodiene synthase, found in Fusarium sporotrichioides.